The sequence spans 258 residues: Small ribosomal subunit protein mS40 (258 aa).

A mitochondrion-targeting transit peptide spans 1–35 (MAASVLNTVLRRLPMLSLFRGSHRVQVPLQTLCTK). Residues serine 38 and serine 49 each carry the phosphoserine modification. Residues 214 to 258 (SRLRRLYQGHLQEESGPPPESMPKMPPRTPAEASSTGQTGPQSAL) form a disordered region. A compositionally biased stretch (pro residues) spans 229 to 242 (GPPPESMPKMPPRT). Polar residues predominate over residues 245 to 258 (EASSTGQTGPQSAL).

The protein belongs to the bacterial ribosomal protein bS18 family. Mitochondrion-specific ribosomal protein mS40 subfamily. Component of the mitochondrial small ribosomal subunit (mt-SSU). Mature mammalian 55S mitochondrial ribosomes consist of a small (28S) and a large (39S) subunit. The 28S small subunit contains a 12S ribosomal RNA (12S mt-rRNA) and 30 different proteins. The 39S large subunit contains a 16S rRNA (16S mt-rRNA), a copy of mitochondrial valine transfer RNA (mt-tRNA(Val)), which plays an integral structural role, and 52 different proteins. mS40 has a zinc binding site.

The protein resides in the mitochondrion. The sequence is that of Small ribosomal subunit protein mS40 (MRPS18B) from Homo sapiens (Human).